The following is a 437-amino-acid chain: Carbonic anhydrase 9 (437 aa).

The first 31 residues, 1–31 (MASLGPSPWAPLSTPAPTAQLLLFLLLQVSA), serve as a signal peptide directing secretion. A proteoglycan-like (PG) region spans residues 32–95 (QPQGLSGMQG…RMEESLGLED (64 aa)). Residues 32-390 (QPQGLSGMQG…HVNSCFTAGD (359 aa)) are Extracellular-facing. Residues 34 to 118 (QGLSGMQGEP…HGDEKGGGHS (85 aa)) form a disordered region. Acidic residues predominate over residues 50–79 (SGEDELGVDVLPSEEDAPEEADPPDGEDPP). The interval 96–390 (LSTPEAPEHS…HVNSCFTAGD (295 aa)) is catalytic. T98 carries O-linked (GlcNAc...) threonine glycosylation. In terms of domain architecture, Alpha-carbonic anhydrase spans 118-369 (SHWSYGGTLL…LNGRTIEASF (252 aa)). A disulfide bridge links C135 with C315. H179 functions as the Proton donor/acceptor in the catalytic mechanism. Residues H205, H207, and H230 each contribute to the Zn(2+) site. Residue 311–312 (TT) coordinates substrate. N-linked (GlcNAc...) asparagine glycosylation is present at N325. The helical transmembrane segment at 391 to 411 (ILALVFGLLFAVTSIAFLLQL) threads the bilayer. Residues 412-437 (RRQHRHRSGTKDRVSYSPAEMTETGA) lie on the Cytoplasmic side of the membrane. A Phosphotyrosine modification is found at Y427.

It belongs to the alpha-carbonic anhydrase family. As to quaternary structure, forms oligomers linked by disulfide bonds. The cofactor is Zn(2+). Post-translationally, asn-325 bears high-mannose type glycan structures.

Its subcellular location is the nucleus. The protein resides in the nucleolus. It localises to the cell membrane. It is found in the cell projection. The protein localises to the microvillus membrane. The catalysed reaction is hydrogencarbonate + H(+) = CO2 + H2O. With respect to regulation, inhibited by acetazolamide. In terms of biological role, catalyzes the interconversion between carbon dioxide and water and the dissociated ions of carbonic acid (i.e. bicarbonate and hydrogen ions). In Mus musculus (Mouse), this protein is Carbonic anhydrase 9 (Ca9).